Here is a 487-residue protein sequence, read N- to C-terminus: Betaine aldehyde dehydrogenase (487 aa).

2 residues coordinate K(+): isoleucine 27 and aspartate 93. 149-151 (GAW) contributes to the NAD(+) binding site. Catalysis depends on lysine 161, which acts as the Charge relay system. Residues 175-178 (KPSE) and 228-231 (SVPT) each bind NAD(+). Residue leucine 243 coordinates K(+). Glutamate 249 (proton acceptor) is an active-site residue. Residues glycine 251, cysteine 283, and glutamate 384 each contribute to the NAD(+) site. Cysteine 283 serves as the catalytic Nucleophile. Cysteine 283 bears the Cysteine sulfenic acid (-SOH) mark. Residues lysine 454 and glycine 457 each coordinate K(+). Residue glutamate 461 is the Charge relay system of the active site.

This sequence belongs to the aldehyde dehydrogenase family. In terms of assembly, dimer of dimers. Requires K(+) as cofactor.

The enzyme catalyses betaine aldehyde + NAD(+) + H2O = glycine betaine + NADH + 2 H(+). It participates in amine and polyamine biosynthesis; betaine biosynthesis via choline pathway; betaine from betaine aldehyde: step 1/1. Involved in the biosynthesis of the osmoprotectant glycine betaine. Catalyzes the irreversible oxidation of betaine aldehyde to the corresponding acid. This is Betaine aldehyde dehydrogenase from Brucella anthropi (strain ATCC 49188 / DSM 6882 / CCUG 24695 / JCM 21032 / LMG 3331 / NBRC 15819 / NCTC 12168 / Alc 37) (Ochrobactrum anthropi).